The chain runs to 555 residues: Synaptotagmin-14 (555 aa).

Residues 1-24 (MAIEGGERTCGVHELICIRKVSPE) lie on the Extracellular side of the membrane. A helical; Signal-anchor for type III membrane protein membrane pass occupies residues 25–47 (AVGFLSAVGVFIILMLLLFLYIN). At 48 to 555 (KKFCFENVGG…VCRWHALLES (508 aa)) the chain is on the cytoplasmic side. Disordered stretches follow at residues 157–179 (TPPL…HLSC) and 222–257 (GYEE…DPEP). C2 domains lie at 260–379 (KYGT…SLPV) and 415–550 (SVPE…CRWH).

The protein belongs to the synaptotagmin family. Homodimer. Can also form heterodimers. Highly expressed in fetal and adult brain tissue.

Its subcellular location is the membrane. May be involved in the trafficking and exocytosis of secretory vesicles in non-neuronal tissues. Is Ca(2+)-independent. The chain is Synaptotagmin-14 (SYT14) from Homo sapiens (Human).